The following is a 103-amino-acid chain: N(4)-acetylcytidine amidohydrolase (103 aa).

One can recognise an ASCH domain in the interval Ile-6 to Phe-100. Lys-21 acts as the Proton acceptor in catalysis. Residue Thr-24 is the Nucleophile of the active site. Glu-74 (proton donor) is an active-site residue.

It belongs to the N(4)-acetylcytidine amidohydrolase family.

The enzyme catalyses N(4)-acetylcytidine + H2O = cytidine + acetate + H(+). The catalysed reaction is N(4)-acetyl-2'-deoxycytidine + H2O = 2'-deoxycytidine + acetate + H(+). It catalyses the reaction N(4)-acetylcytosine + H2O = cytosine + acetate + H(+). Catalyzes the hydrolysis of N(4)-acetylcytidine (ac4C). In Salmonella arizonae (strain ATCC BAA-731 / CDC346-86 / RSK2980), this protein is N(4)-acetylcytidine amidohydrolase (yqfB).